Consider the following 92-residue polypeptide: MKLCVTVLSLLVLVAAFCSPALSAPMGSDPPTSCCFTYTVRKLPRNFVTDYYETSSLCSQPAVVFQTKKGRQVCANPSDDWVQEYMDDLELN.

The first 23 residues, M1–S23, serve as a signal peptide directing secretion. 2 disulfide bridges follow: C34–C58 and C35–C74.

It belongs to the intercrine beta (chemokine CC) family. As to quaternary structure, homodimer. Interacts with CCR5.

Its subcellular location is the secreted. In terms of biological role, monokine with inflammatory and chemokinetic properties. This is C-C motif chemokine 4 (CCL4) from Sus scrofa (Pig).